A 364-amino-acid chain; its full sequence is Putative [LysW]-aminoadipate semialdehyde/glutamate semialdehyde transaminase (364 aa).

Pyridoxal 5'-phosphate-binding positions include 90–91 and phenylalanine 117; that span reads GT. Arginine 120 serves as a coordination point for substrate. 202–205 serves as a coordination point for pyridoxal 5'-phosphate; the sequence is DEVQ. Lysine 230 carries the post-translational modification N6-(pyridoxal phosphate)lysine. Serine 254 is a substrate binding site. Residue threonine 255 participates in pyridoxal 5'-phosphate binding.

It belongs to the class-III pyridoxal-phosphate-dependent aminotransferase family. LysJ subfamily. In terms of assembly, homodimer. Pyridoxal 5'-phosphate serves as cofactor.

It localises to the cytoplasm. It catalyses the reaction [amino-group carrier protein]-C-terminal-gamma-(L-lysyl)-L-glutamate + 2-oxoglutarate = [amino-group carrier protein]-C-terminal-N-(1-carboxy-5-oxopentan-1-yl)-L-glutamine + L-glutamate. The enzyme catalyses [amino-group carrier protein]-C-terminal-gamma-(L-ornithyl)-L-glutamate + 2-oxoglutarate = [amino-group carrier protein]-C-terminal-gamma-(L-glutamyl-5-semialdehyde)-L-glutamate + L-glutamate. Its pathway is amino-acid biosynthesis; L-lysine biosynthesis via AAA pathway; L-lysine from L-alpha-aminoadipate (Thermus route): step 4/5. The protein operates within amino-acid biosynthesis; L-arginine biosynthesis. In terms of biological role, involved in both the arginine and lysine biosynthetic pathways. This chain is Putative [LysW]-aminoadipate semialdehyde/glutamate semialdehyde transaminase, found in Pyrococcus abyssi (strain GE5 / Orsay).